We begin with the raw amino-acid sequence, 286 residues long: Plasma membrane ascorbate-dependent reductase CYBRD1 (286 aa).

The Cytoplasmic segment spans residues 1-7 (MAMEGYW). Residues 8–32 (RFLALLGSALLVGFLSVIFALVWVL) form a helical membrane-spanning segment. Positions 15–220 (SALLVGFLSV…FGALIFWIVT (206 aa)) constitute a Cytochrome b561 domain. At 33–47 (HYREGLGWDGSALEF) the chain is on the extracellular side. The chain crosses the membrane as a helical span at residues 48–69 (NWHPVLMVTGFVFIQGIAIIVY). Residues histidine 50, arginine 70, and lysine 79 each contribute to the heme b site. Over 70–78 (RLPWTWKCS) the chain is Cytoplasmic. L-ascorbate is bound by residues lysine 79 and lysine 83. Residues 79 to 105 (KLLMKSIHAGLNAVAAILAIISVVAVF) traverse the membrane as a helical segment. Histidine 86 provides a ligand contact to heme b. The Extracellular portion of the chain corresponds to 106–118 (ENHNVNNIANMYS). Residue histidine 108 participates in Fe(3+) binding. Residues 115-118 (NMYS) and histidine 120 contribute to the heme b site. Residues 119-144 (LHSWVGLIAVICYLLQLLSGFSVFLL) traverse the membrane as a helical segment. Residues 145 to 151 (PWAPLSL) lie on the Cytoplasmic side of the membrane. Residue arginine 152 coordinates L-ascorbate. Residues 152–179 (RAFLMPIHVYSGIVIFGTVIATALMGLT) traverse the membrane as a helical segment. Positions 159 and 180 each coordinate heme b. Over 180–197 (EKLIFSLRDPAYSTFPPE) the chain is Extracellular. Residues 198–222 (GVFVNTLGLLILVFGALIFWIVTRP) form a helical membrane-spanning segment. At 223–286 (QWKRPKEPNS…LDEAGQRSTM (64 aa)) the chain is on the cytoplasmic side. Residue lysine 225 participates in heme b binding. The interval 229-268 (EPNSTILHPNGGTEQGARGSMPAYSGNNMDKSDSELNSEV) is disordered. Phosphoserine is present on serine 232. The residue at position 285 (threonine 285) is a Phosphothreonine.

In terms of assembly, homodimer. Heme b is required as a cofactor. In terms of tissue distribution, present in erythrocyte membranes (at protein level). Also expressed in respiratory epithelium.

It localises to the cell membrane. The protein resides in the apical cell membrane. The catalysed reaction is Fe(3+)(out) + L-ascorbate(in) = monodehydro-L-ascorbate radical(in) + Fe(2+)(out) + H(+). It catalyses the reaction Cu(2+)(out) + L-ascorbate(in) = Cu(+)(out) + monodehydro-L-ascorbate radical(in) + H(+). It carries out the reaction monodehydro-L-ascorbate radical(out) + L-ascorbate(in) = monodehydro-L-ascorbate radical(in) + L-ascorbate(out). Activated by chelators like citrate, malate, and oxalate specially at alkaline pH. Its function is as follows. Plasma membrane reductase that uses cytoplasmic ascorbate as an electron donor to reduce extracellular Fe(3+) into Fe(2+). Probably functions in dietary iron absorption at the brush border of duodenal enterocytes by producing Fe(2+), the divalent form of iron that can be transported into enterocytes. It is also able to reduce extracellular monodehydro-L-ascorbate and may be involved in extracellular ascorbate regeneration by erythrocytes in blood. May also act as a ferrireductase in airway epithelial cells. May also function as a cupric transmembrane reductase. The sequence is that of Plasma membrane ascorbate-dependent reductase CYBRD1 from Homo sapiens (Human).